The following is a 718-amino-acid chain: K(+)-insensitive pyrophosphate-energized proton pump (718 aa).

6 helical membrane-spanning segments follow: residues 6–26 (AVLV…IWAI), 54–76 (LTRQ…WYLL), 81–103 (AIGF…HVSV), 112–132 (AASL…AITG), 133–153 (LLVA…LTVW), and 168–188 (VSLG…GGIF). Lysine 190 is a substrate binding site. Residues aspartate 193, aspartate 197, asparagine 220, and aspartate 223 each contribute to the Mg(2+) site. 6 consecutive transmembrane segments (helical) span residues 240–260 (AVTV…SDIL), 265–285 (LYPL…TFFV), 300–320 (GLIA…TLTV), 335–355 (GTNL…IVVI), 385–405 (GLAV…GGII), and 413–433 (LFGT…IVAL). Position 441 (aspartate 441) interacts with Mg(2+). The next 4 helical transmembrane spans lie at 472–492 (AVTK…LFAA), 524–544 (YVVA…GMAM), 593–613 (IIPS…VLLI), and 620–640 (AFAA…FVAI). Ca(2+) is bound by residues aspartate 650, aspartate 682, and aspartate 686. Lysine 689 is a binding site for substrate. A helical membrane pass occupies residues 695–715 (AVNPAIKITNIVALLLLAVLA).

The protein belongs to the H(+)-translocating pyrophosphatase (TC 3.A.10) family. K(+)-insensitive subfamily. As to quaternary structure, homodimer. It depends on Mg(2+) as a cofactor.

The protein resides in the cell inner membrane. It catalyses the reaction diphosphate + H2O + H(+)(in) = 2 phosphate + 2 H(+)(out). Its function is as follows. Proton pump that utilizes the energy of pyrophosphate hydrolysis as the driving force for proton movement across the membrane. Generates a proton motive force. This chain is K(+)-insensitive pyrophosphate-energized proton pump, found in Brucella anthropi (strain ATCC 49188 / DSM 6882 / CCUG 24695 / JCM 21032 / LMG 3331 / NBRC 15819 / NCTC 12168 / Alc 37) (Ochrobactrum anthropi).